Here is a 259-residue protein sequence, read N- to C-terminus: MAEPGRTFNTAFAPPPPLWKHFTPENLQRLENIKKEASKGEDGRRRKKEWSPAELRSLKIPPELRFLVPPEIPSEQYSIFGEVQNLSTALPSLEEQGITQLYPSSPKPDTKSGDSSQPAQPLNHAYYLLKISKSLLLNFLEFVGILSVAPEQFEPKVEDIRNLFINAHHLLNLYRPHQARESLIMMMEAQLARTKDEIQQMDKLKEEVNAVLDQLAAEGADVGSTIQSTTKDKKGVKPEDQIPEDSKLLWDILDGKLDD.

Disordered stretches follow at residues 1–52 (MAEP…EWSP), 99–118 (TQLY…SSQP), and 223–242 (GSTI…EDQI). Residues 31–44 (ENIKKEASKGEDGR) show a composition bias toward basic and acidic residues. Over residues 230–242 (TKDKKGVKPEDQI) the composition is skewed to basic and acidic residues.

The protein belongs to the Mediator complex subunit 7 family. As to quaternary structure, component of the Mediator complex.

It is found in the nucleus. Functionally, component of the Mediator complex, a coactivator involved in the regulated transcription of nearly all RNA polymerase II-dependent genes. Mediator functions as a bridge to convey information from gene-specific regulatory proteins to the basal RNA polymerase II transcription machinery. Mediator is recruited to promoters by direct interactions with regulatory proteins and serves as a scaffold for the assembly of a functional preinitiation complex with RNA polymerase II and the general transcription factors. This chain is Mediator of RNA polymerase II transcription subunit 7 (med7), found in Emericella nidulans (strain FGSC A4 / ATCC 38163 / CBS 112.46 / NRRL 194 / M139) (Aspergillus nidulans).